We begin with the raw amino-acid sequence, 749 residues long: Ribosomal RNA large subunit methyltransferase K/L (749 aa).

The THUMP domain maps to 43 to 154; that stretch reads QGYKVCLWSR…KDKATIYLDL (112 aa). The disordered stretch occupies residues 386-406; it reads VEPVAPKKTNKETPEPINPWT.

It belongs to the methyltransferase superfamily. RlmKL family.

The protein resides in the cytoplasm. The catalysed reaction is guanosine(2445) in 23S rRNA + S-adenosyl-L-methionine = N(2)-methylguanosine(2445) in 23S rRNA + S-adenosyl-L-homocysteine + H(+). The enzyme catalyses guanosine(2069) in 23S rRNA + S-adenosyl-L-methionine = N(2)-methylguanosine(2069) in 23S rRNA + S-adenosyl-L-homocysteine + H(+). Functionally, specifically methylates the guanine in position 2445 (m2G2445) and the guanine in position 2069 (m7G2069) of 23S rRNA. In Psychromonas ingrahamii (strain DSM 17664 / CCUG 51855 / 37), this protein is Ribosomal RNA large subunit methyltransferase K/L.